Reading from the N-terminus, the 68-residue chain is UPF0291 protein TTE2340 (68 aa).

This sequence belongs to the UPF0291 family.

The protein resides in the cytoplasm. The chain is UPF0291 protein TTE2340 from Caldanaerobacter subterraneus subsp. tengcongensis (strain DSM 15242 / JCM 11007 / NBRC 100824 / MB4) (Thermoanaerobacter tengcongensis).